Reading from the N-terminus, the 298-residue chain is GTP cyclohydrolase FolE2 (298 aa).

Belongs to the GTP cyclohydrolase IV family.

The catalysed reaction is GTP + H2O = 7,8-dihydroneopterin 3'-triphosphate + formate + H(+). Its pathway is cofactor biosynthesis; 7,8-dihydroneopterin triphosphate biosynthesis; 7,8-dihydroneopterin triphosphate from GTP: step 1/1. In terms of biological role, converts GTP to 7,8-dihydroneopterin triphosphate. The chain is GTP cyclohydrolase FolE2 from Pseudomonas fluorescens (strain SBW25).